The primary structure comprises 605 residues: Elongation factor 4 (605 aa).

The tr-type G domain maps to Lys-11–Arg-193. GTP-binding positions include Asp-23–Thr-28 and Asn-140–Asp-143.

The protein belongs to the TRAFAC class translation factor GTPase superfamily. Classic translation factor GTPase family. LepA subfamily.

The protein localises to the cell membrane. It carries out the reaction GTP + H2O = GDP + phosphate + H(+). Its function is as follows. Required for accurate and efficient protein synthesis under certain stress conditions. May act as a fidelity factor of the translation reaction, by catalyzing a one-codon backward translocation of tRNAs on improperly translocated ribosomes. Back-translocation proceeds from a post-translocation (POST) complex to a pre-translocation (PRE) complex, thus giving elongation factor G a second chance to translocate the tRNAs correctly. Binds to ribosomes in a GTP-dependent manner. The sequence is that of Elongation factor 4 from Phytoplasma mali (strain AT).